The sequence spans 195 residues: Cytochrome c oxidase assembly protein CtaG (195 aa).

The Cytoplasmic segment spans residues 1-9 (MALNGPQKT). The chain crosses the membrane as a helical; Signal-anchor for type II membrane protein span at residues 10–30 (VVQLVGVVVLMGGLAWASVPF). Topologically, residues 31-195 (YDWFCRVTGF…DTSGAETELN (165 aa)) are periplasmic.

Belongs to the COX11/CtaG family.

The protein resides in the cell inner membrane. Exerts its effect at some terminal stage of cytochrome c oxidase synthesis, probably by being involved in the insertion of the copper B into subunit I. The chain is Cytochrome c oxidase assembly protein CtaG from Ruegeria sp. (strain TM1040) (Silicibacter sp.).